We begin with the raw amino-acid sequence, 136 residues long: NADPH-dependent 7-cyano-7-deazaguanine reductase (136 aa).

The active-site Thioimide intermediate is cysteine 50. Residue aspartate 57 is the Proton donor of the active site. Residues 72–74 (YEL) and 91–92 (HE) each bind substrate.

The protein belongs to the GTP cyclohydrolase I family. QueF type 1 subfamily.

It is found in the cytoplasm. It carries out the reaction 7-aminomethyl-7-carbaguanine + 2 NADP(+) = 7-cyano-7-deazaguanine + 2 NADPH + 3 H(+). Its pathway is tRNA modification; tRNA-queuosine biosynthesis. Catalyzes the NADPH-dependent reduction of 7-cyano-7-deazaguanine (preQ0) to 7-aminomethyl-7-deazaguanine (preQ1). This Prochlorococcus marinus (strain MIT 9312) protein is NADPH-dependent 7-cyano-7-deazaguanine reductase.